Here is a 249-residue protein sequence, read N- to C-terminus: 1-(5-phosphoribosyl)-5-[(5-phosphoribosylamino)methylideneamino] imidazole-4-carboxamide isomerase (249 aa).

The active-site Proton acceptor is the aspartate 11. Residue aspartate 133 is the Proton donor of the active site.

Belongs to the HisA/HisF family.

It localises to the cytoplasm. It catalyses the reaction 1-(5-phospho-beta-D-ribosyl)-5-[(5-phospho-beta-D-ribosylamino)methylideneamino]imidazole-4-carboxamide = 5-[(5-phospho-1-deoxy-D-ribulos-1-ylimino)methylamino]-1-(5-phospho-beta-D-ribosyl)imidazole-4-carboxamide. It functions in the pathway amino-acid biosynthesis; L-histidine biosynthesis; L-histidine from 5-phospho-alpha-D-ribose 1-diphosphate: step 4/9. The sequence is that of 1-(5-phosphoribosyl)-5-[(5-phosphoribosylamino)methylideneamino] imidazole-4-carboxamide isomerase from Actinobacillus succinogenes (strain ATCC 55618 / DSM 22257 / CCUG 43843 / 130Z).